Consider the following 109-residue polypeptide: Parvalbumin beta-1 (109 aa).

N-acetylserine is present on serine 2. EF-hand domains follow at residues 39–74 (KSHE…FGAG) and 78–109 (LTAA…LVKA). Residues aspartate 52, aspartate 54, serine 56, phenylalanine 58, glutamate 60, glutamate 63, aspartate 91, aspartate 93, aspartate 95, methionine 97, and glutamate 102 each coordinate Ca(2+).

It belongs to the parvalbumin family.

In terms of biological role, in muscle, parvalbumin is thought to be involved in relaxation after contraction. It binds two calcium ions. In Gadus chalcogrammus (Alaska pollock), this protein is Parvalbumin beta-1.